The primary structure comprises 83 residues: Major outer membrane lipoprotein (83 aa).

The first 19 residues, 1 to 19 (MNNVLKFSALALAAVLATG), serve as a signal peptide directing secretion. C20 carries N-palmitoyl cysteine lipidation. Residue C20 is the site of S-diacylglycerol cysteine attachment.

The protein localises to the cell outer membrane. The protein is Major outer membrane lipoprotein (oprI) of Pseudomonas aeruginosa (strain ATCC 15692 / DSM 22644 / CIP 104116 / JCM 14847 / LMG 12228 / 1C / PRS 101 / PAO1).